Here is a 143-residue protein sequence, read N- to C-terminus: Transcriptional regulator MraZ (143 aa).

SpoVT-AbrB domains are found at residues 5–47 and 76–119; these read EYEH…TLEE and AVEV…DRET.

Belongs to the MraZ family. In terms of assembly, forms oligomers.

Its subcellular location is the cytoplasm. It is found in the nucleoid. The protein is Transcriptional regulator MraZ of Staphylococcus saprophyticus subsp. saprophyticus (strain ATCC 15305 / DSM 20229 / NCIMB 8711 / NCTC 7292 / S-41).